The primary structure comprises 593 residues: RNA-binding protein 47 (593 aa).

Residues 1–20 (MTAEDSTAAMSSDSAAGSSA) are compositionally biased toward low complexity. The segment at 1-25 (MTAEDSTAAMSSDSAAGSSAKVPEG) is disordered. RRM domains lie at 71 to 149 (CEVF…CSVD), 151 to 233 (CRLF…WAEP), and 246 to 318 (KILY…LAKP). At arginine 332 the chain carries Omega-N-methylarginine. An asymmetric dimethylarginine; alternate mark is found at arginine 394 and arginine 405. An omega-N-methylarginine; alternate mark is found at arginine 394 and arginine 405.

Belongs to the RRM RBM47 family. As to quaternary structure, homodimer. Interacts with A1CF. Interacts with APOBEC1; form an mRNA editing complex. Interacts with RBPMS.

The protein localises to the nucleus. It is found in the cytoplasm. Functionally, single-stranded RNA-binding protein that functions in a variety of RNA processes, including alternative splicing, RNA stabilization, and RNA editing. Functions as an enzyme-substrate adapter for the cytidine deaminase APOBEC1. With APOBEC1 forms an mRNA editing complex involved into cytidine to uridine editing of a variety of mRNA molecules. Through the binding of their 3'UTR, also stabilizes a variety of mRNAs and regulates the expression of genes such as the interferon alpha/beta receptor and interleukin-10. Also involved in the alternative splicing of several genes including TJP1. Binds the pre-mRNA (U)GCAUG consensus sequences in downstream intronic regions of alternative exons, regulating their exclusion and inclusion into mRNAs. Independently of its RNA-binding activity, could negatively regulate MAVS by promoting its lysosomal degradation. The polypeptide is RNA-binding protein 47 (Homo sapiens (Human)).